The following is a 251-amino-acid chain: Probable transcriptional regulatory protein cauri_1421 (251 aa).

The tract at residues 1 to 21 is disordered; that stretch reads MAGHSKWATTKHKKAANDAKR.

Belongs to the TACO1 family.

The protein resides in the cytoplasm. The protein is Probable transcriptional regulatory protein cauri_1421 of Corynebacterium aurimucosum (strain ATCC 700975 / DSM 44827 / CIP 107346 / CN-1) (Corynebacterium nigricans).